The chain runs to 344 residues: Holliday junction branch migration complex subunit RuvB (344 aa).

A large ATPase domain (RuvB-L) region spans residues 4-184 (QDRIIDANAK…FGIVQRLEFY (181 aa)). Residues arginine 24, glycine 65, lysine 68, threonine 69, threonine 70, 131–133 (EDF), arginine 174, tyrosine 184, and arginine 221 each bind ATP. A Mg(2+)-binding site is contributed by threonine 69. A small ATPAse domain (RuvB-S) region spans residues 185–255 (NIEDLTHIVE…IADLALNMLN (71 aa)). The tract at residues 258–344 (EHGFDHMDRR…ALKQDSLPGI (87 aa)) is head domain (RuvB-H). The DNA site is built by arginine 294, arginine 313, and arginine 318.

This sequence belongs to the RuvB family. Homohexamer. Forms an RuvA(8)-RuvB(12)-Holliday junction (HJ) complex. HJ DNA is sandwiched between 2 RuvA tetramers; dsDNA enters through RuvA and exits via RuvB. An RuvB hexamer assembles on each DNA strand where it exits the tetramer. Each RuvB hexamer is contacted by two RuvA subunits (via domain III) on 2 adjacent RuvB subunits; this complex drives branch migration. In the full resolvosome a probable DNA-RuvA(4)-RuvB(12)-RuvC(2) complex forms which resolves the HJ.

It localises to the cytoplasm. It carries out the reaction ATP + H2O = ADP + phosphate + H(+). Its function is as follows. The RuvA-RuvB-RuvC complex processes Holliday junction (HJ) DNA during genetic recombination and DNA repair, while the RuvA-RuvB complex plays an important role in the rescue of blocked DNA replication forks via replication fork reversal (RFR). RuvA specifically binds to HJ cruciform DNA, conferring on it an open structure. The RuvB hexamer acts as an ATP-dependent pump, pulling dsDNA into and through the RuvAB complex. RuvB forms 2 homohexamers on either side of HJ DNA bound by 1 or 2 RuvA tetramers; 4 subunits per hexamer contact DNA at a time. Coordinated motions by a converter formed by DNA-disengaged RuvB subunits stimulates ATP hydrolysis and nucleotide exchange. Immobilization of the converter enables RuvB to convert the ATP-contained energy into a lever motion, pulling 2 nucleotides of DNA out of the RuvA tetramer per ATP hydrolyzed, thus driving DNA branch migration. The RuvB motors rotate together with the DNA substrate, which together with the progressing nucleotide cycle form the mechanistic basis for DNA recombination by continuous HJ branch migration. Branch migration allows RuvC to scan DNA until it finds its consensus sequence, where it cleaves and resolves cruciform DNA. This chain is Holliday junction branch migration complex subunit RuvB, found in Saccharophagus degradans (strain 2-40 / ATCC 43961 / DSM 17024).